Consider the following 344-residue polypeptide: Pre-mRNA polyadenylation factor fip1 (344 aa).

Disordered stretches follow at residues 1-99 (MSNA…LSTA) and 230-344 (NYNT…RNRY). The span at 28–38 (VTVSNAKSPEQ) shows a compositional bias: polar residues. The span at 39-50 (ASEESDDSDIEF) shows a compositional bias: acidic residues. A compositionally biased stretch (basic and acidic residues) spans 80-92 (QVEKTAVEVKTTE). Residues 243–258 (SGAATPNAYVNNNPSS) are compositionally biased toward low complexity. The span at 271 to 301 (NITSSAGMTHAQPTHNPTSSYGNGASTNYNA) shows a compositional bias: polar residues. The segment covering 302-317 (SRPPSNHPHSSNYPSS) has biased composition (low complexity).

This sequence belongs to the FIP1 family.

It localises to the nucleus. Functionally, pre-mRNA polyadenylation factor that directly interacts with poly(A) polymerase. This Schizosaccharomyces pombe (strain 972 / ATCC 24843) (Fission yeast) protein is Pre-mRNA polyadenylation factor fip1.